Reading from the N-terminus, the 36-residue chain is MSDIN-like toxin proprotein 10 (36 aa).

Positions 1–10 (MSDINATRLP) are excised as a propeptide. Residues 11-19 (GAYPPVPMP) constitute a cross-link (cyclopeptide (Gly-Pro)). A propeptide spanning residues 20–36 (CVGDADNFTLTRGENLC) is cleaved from the precursor.

This sequence belongs to the MSDIN fungal toxin family. In terms of processing, processed by the macrocyclase-peptidase enzyme POPB to yield a toxic cyclic nonapeptide. POPB first removes 10 residues from the N-terminus. Conformational trapping of the remaining peptide forces the enzyme to release this intermediate rather than proceed to macrocyclization. The enzyme rebinds the remaining peptide in a different conformation and catalyzes macrocyclization of the N-terminal 9 residues.

Its function is as follows. Probable toxin that belongs to the MSDIN-like toxin family responsible for a large number of food poisoning cases and deaths. The protein is MSDIN-like toxin proprotein 10 of Amanita bisporigera (Destroying angel).